The following is a 434-amino-acid chain: Putative DD-carboxypeptidase TP_0574 (434 aa).

An N-terminal signal peptide occupies residues 1-19; sequence MKVKYALLSAGALQLLVVG. Cysteine 20 is lipidated: N-palmitoyl cysteine. A lipid anchor (S-diacylglycerol cysteine) is attached at cysteine 20.

As to quaternary structure, probably a monomer; a non-lipidated construct (residues 22-434) is monomeric in solution but crystallizes as a homodimer. Requires Zn(2+) as cofactor. In terms of processing, the N-terminus is blocked. Present as a doublet of low abundance 48 kDa and high abundance 47 kDa proteins. The longer form is probably due to readthrough of the stop codon; the extra amino acids at the C-terminus would be X-Lys-Arg-Gly-Val-Leu-Ser-Arg-Val-Ser, a peptide antibody against this sequence detects only the 48 kDa form.

The protein resides in the cell inner membrane. A possible D,D-carboxypeptidase, that releases amino acids sequentially from a proteins C-terminus. Has zinc-dependent carboxypeptidase activity on synthetic depsipeptide substrates. May serve to decrease cross-linking of peptidoglycan, promoting the highly sinusous motility of this spirochaete. Overexpression of the whole protein in E.coli leads to aberrant cell morphology and extrusion of the cytoplasm, while overexpression of a construct with the first 62 resides of the protein fused to PhoA does have this effect, suggesting the whole protein, not the lipoprotein moiety, is toxic. Binds penicillin. Penicillin binding is covalent, does not require lipidation, and is zinc-dependent. While this protein has beta-lactamase activity in vitro, that is probably not its role in vivo, as T.pallidum is very sensitive to penicillin antibiotics. Functionally, a pathogen-specific membrane antigen. Most abundant of the membrane lipoproteins, only found in pathogenic treponemes, suggesting that it is an important structural moiety in the cell envelope of virulent treponemal subspecies. A lipopeptide corresponding to the first 6 mature residues induces host (human and mouse) cytokine release by monocyte cell lines via TLR2 and CD14; nonlipidated protein does not stimulate host cells. Stimulates host (human) dendritic cell maturation to become MHC class II-positive antigen presenting cells via TLR2, which depends on lipidation; nonlipidated protein does not stimulate maturation. In Treponema pallidum (strain Nichols), this protein is Putative DD-carboxypeptidase TP_0574.